We begin with the raw amino-acid sequence, 294 residues long: MSLKRSDDYQDLEEGIAMEDGGNIKDEEEKPLDPIEEQNKKRWVLIRAVLGELLCTFLFVYVLCATSANFIRLGSPPNPVVGGLSTGFAAVALIYSFADVSGAHFNPAVTFATCVTRKTSITKGLMYVGAQLVGSVLASLILLATFPGNFPGDKNAASAVAIAPSTDANIGNAFLTELVLTFILVYVIFAVAFDTVDNSVKTKVVGKSSSNNLTIYTTSGQTKAGFAPIAIGFTLGFLCFLGGSVSGGAFNPARVFGTALVGNNWTRHWMYWIADFLGAGLAGFAQKFFSSTHK.

The tract at residues 1 to 31 (MSLKRSDDYQDLEEGIAMEDGGNIKDEEEKP) is disordered. Residues 1 to 42 (MSLKRSDDYQDLEEGIAMEDGGNIKDEEEKPLDPIEEQNKKR) are Cytoplasmic-facing. Positions 22 to 31 (GNIKDEEEKP) are enriched in basic and acidic residues. The helical transmembrane segment at 43–63 (WVLIRAVLGELLCTFLFVYVL) threads the bilayer. Topologically, residues 64 to 79 (CATSANFIRLGSPPNP) are extracellular. An O-linked (GalNAc...) serine glycan is attached at serine 75. A helical membrane pass occupies residues 80–100 (VVGGLSTGFAAVALIYSFADV). The Cytoplasmic portion of the chain corresponds to 101 to 123 (SGAHFNPAVTFATCVTRKTSITK). Residues 106–108 (NPA) carry the NPA 1 motif. A helical transmembrane segment spans residues 124-144 (GLMYVGAQLVGSVLASLILLA). Topologically, residues 145–172 (TFPGNFPGDKNAASAVAIAPSTDANIGN) are extracellular. The helical transmembrane segment at 173–193 (AFLTELVLTFILVYVIFAVAF) threads the bilayer. The Cytoplasmic segment spans residues 194 to 224 (DTVDNSVKTKVVGKSSSNNLTIYTTSGQTKA). The segment at 208–219 (SSSNNLTIYTTS) is required for water permeability. The helical transmembrane segment at 225–245 (GFAPIAIGFTLGFLCFLGGSV) threads the bilayer. Over 246–268 (SGGAFNPARVFGTALVGNNWTRH) the chain is Extracellular. The NPA 2 signature appears at 251 to 253 (NPA). Residues 269 to 289 (WMYWIADFLGAGLAGFAQKFF) traverse the membrane as a helical segment. At 290–294 (SSTHK) the chain is on the cytoplasmic side.

Belongs to the MIP/aquaporin (TC 1.A.8) family. In terms of processing, glycosylated and non-glycosylated forms exist throughout all developmental stages.

The protein localises to the cell membrane. It is found in the cytoplasmic vesicle. Functionally, putatively gated water-specific channel, requiring a cysteine residue within the channel. Impermeable to water, glycerol and urea when expressed in Xenopus oocytes. Not regulated by pH; channels remain impermeable to water at pH 7.4 and 5.2. This chain is Aquaporin-B, found in Dictyostelium discoideum (Social amoeba).